The sequence spans 462 residues: Argininosuccinate lyase (462 aa).

The protein belongs to the lyase 1 family. Argininosuccinate lyase subfamily.

The protein localises to the cytoplasm. It carries out the reaction 2-(N(omega)-L-arginino)succinate = fumarate + L-arginine. The protein operates within amino-acid biosynthesis; L-arginine biosynthesis; L-arginine from L-ornithine and carbamoyl phosphate: step 3/3. This Caldicellulosiruptor bescii (strain ATCC BAA-1888 / DSM 6725 / KCTC 15123 / Z-1320) (Anaerocellum thermophilum) protein is Argininosuccinate lyase.